Here is a 180-residue protein sequence, read N- to C-terminus: Der GTPase-activating protein YihI (180 aa).

Disordered stretches follow at residues 1-88 and 147-180; these read MTRK…KERR and PEVTEEAPVRKGAKTDEDLLDQFENMDLDSFGKE. Basic and acidic residues-rich tracts occupy residues 18-33, 50-67, 77-88, and 153-163; these read FREKSTTQVDVEARKS, EALDPKHYANGQKKDPRL, VEKKPTTKKERR, and APVRKGAKTDE. Residues 164–173 are compositionally biased toward acidic residues; the sequence is DLLDQFENMD.

The protein belongs to the YihI family. Interacts with Der.

In terms of biological role, a GTPase-activating protein (GAP) that modifies Der/EngA GTPase function. May play a role in ribosome biogenesis. In Photobacterium profundum (strain SS9), this protein is Der GTPase-activating protein YihI.